The primary structure comprises 121 residues: Large ribosomal subunit protein bL21 (121 aa).

The protein belongs to the bacterial ribosomal protein bL21 family. In terms of assembly, part of the 50S ribosomal subunit. Contacts protein L20.

Its function is as follows. This protein binds to 23S rRNA in the presence of protein L20. The chain is Large ribosomal subunit protein bL21 from Gloeobacter violaceus (strain ATCC 29082 / PCC 7421).